Here is a 507-residue protein sequence, read N- to C-terminus: ATP synthase subunit alpha, chloroplastic (507 aa).

170-177 (GDRQTGKA) contacts ATP.

This sequence belongs to the ATPase alpha/beta chains family. F-type ATPases have 2 components, CF(1) - the catalytic core - and CF(0) - the membrane proton channel. CF(1) has five subunits: alpha(3), beta(3), gamma(1), delta(1), epsilon(1). CF(0) has four main subunits: a, b, b' and c.

Its subcellular location is the plastid. It is found in the chloroplast thylakoid membrane. It carries out the reaction ATP + H2O + 4 H(+)(in) = ADP + phosphate + 5 H(+)(out). Produces ATP from ADP in the presence of a proton gradient across the membrane. The alpha chain is a regulatory subunit. The chain is ATP synthase subunit alpha, chloroplastic from Calycanthus floridus var. glaucus (Eastern sweetshrub).